The following is a 121-amino-acid chain: UPF0102 protein XF_0554 (121 aa).

This sequence belongs to the UPF0102 family.

This Xylella fastidiosa (strain 9a5c) protein is UPF0102 protein XF_0554.